Reading from the N-terminus, the 502-residue chain is Mannitol 2-dehydrogenase (502 aa).

Residue 37-48 (IVHIGVGGFHRA) coordinates NAD(+).

It belongs to the mannitol dehydrogenase family. In terms of assembly, monomer.

The catalysed reaction is D-mannitol + NAD(+) = D-fructose + NADH + H(+). Catalyzes the NAD(H)-dependent interconversion of D-fructose and D-mannitol in the mannitol metabolic pathway. The sequence is that of Mannitol 2-dehydrogenase from Aspergillus clavatus (strain ATCC 1007 / CBS 513.65 / DSM 816 / NCTC 3887 / NRRL 1 / QM 1276 / 107).